A 407-amino-acid chain; its full sequence is Inhibin beta B chain (407 aa).

Residues 1–28 form the signal peptide; sequence MDGLPGRALGAACLLLLAAGWLGPEAWG. The interval 26–62 is disordered; sequence AWGSPTPPPTPAAPPPPPPPGSPGGSQDTCTSCGGFR. A propeptide spanning residues 29-292 is cleaved from the precursor; the sequence is SPTPPPTPAA…GDSRHRIRKR (264 aa). Residues 30–47 are compositionally biased toward pro residues; that stretch reads PTPPPTPAAPPPPPPPGS. N-linked (GlcNAc...) asparagine glycosylation occurs at Asn93. Disulfide bonds link Cys296–Cys304, Cys303–Cys372, Cys332–Cys404, and Cys336–Cys406.

It belongs to the TGF-beta family. Dimeric, linked by one or more disulfide bonds. Inhibin B is a dimer of alpha and beta-B. Activin B is a homodimer of beta-B. Activin AB is a dimer of beta-A and beta-B. Interacts with FST and FSTL3. Activin B interacts with BMPR2.

It is found in the secreted. Its function is as follows. Inhibins and activins inhibit and activate, respectively, the secretion of follitropin by the pituitary gland. Inhibins/activins are involved in regulating a number of diverse functions such as hypothalamic and pituitary hormone secretion, gonadal hormone secretion, germ cell development and maturation, erythroid differentiation, insulin secretion, nerve cell survival, embryonic axial development or bone growth, depending on their subunit composition. Inhibins appear to oppose the functions of activins. Activin B is a dimer of alpha and beta-B that plays a role in several essential biological processes including embryonic development, stem cell maintenance and differentiation, haematopoiesis, cell proliferation and wound healing. Signals through type I receptor ACVR1C, abundantly expressed in pancreatic beta cells, and type II receptors like ACVR2A or BMPR2. Upon ligand binding, these receptors phosphorylate intracellular signaling mediators SMAD2 and SMAD3, which form a complex with SMAD4, translocate to the nucleus, and regulate gene expression. Plays a crucial role in the induction of hepcidin by inflammation through activation of ACVR1C and subsequent phosphorylation of SMAD1/5/8. Regulates adipocyte lipid metabolism by decreasing non-esterified fatty acids and glycerol release and increases intracellular triglyceride content. Stimulates wound healing by promoting cell migration and hair follicle regeneration through the JNK and ERK signaling pathways downstream of RHOA. Functionally, inhibin B is a dimer of alpha and beta-B that plays a crucial role in the regulation of the reproductive system by inhibiting the secretion of follicle-stimulating hormone (FSH) from the anterior pituitary gland. Thereby, maintains reproductive homeostasis in both males and females. Acts as a more potent suppressor of FSH release than inhibin A. Functions as competitive receptor antagonist binding activin type II receptors with high affinity in the presence of the TGF-beta type III coreceptor/TGFBR3L. This is Inhibin beta B chain (INHBB) from Homo sapiens (Human).